We begin with the raw amino-acid sequence, 781 residues long: Lon protease (781 aa).

Positions 16-214 (ANVLVTRGIV…KILSFTIDER (199 aa)) constitute a Lon N-terminal domain. 365-372 (GPPGVGKT) lines the ATP pocket. Residues 601–781 (EYMPGVVNGM…YDDVYNRLFK (181 aa)) enclose the Lon proteolytic domain. Residues serine 688 and lysine 731 contribute to the active site.

This sequence belongs to the peptidase S16 family. Homohexamer. Organized in a ring with a central cavity.

It is found in the cytoplasm. It catalyses the reaction Hydrolysis of proteins in presence of ATP.. In terms of biological role, ATP-dependent serine protease that mediates the selective degradation of mutant and abnormal proteins as well as certain short-lived regulatory proteins. Required for cellular homeostasis and for survival from DNA damage and developmental changes induced by stress. Degrades polypeptides processively to yield small peptide fragments that are 5 to 10 amino acids long. Binds to DNA in a double-stranded, site-specific manner. The sequence is that of Lon protease from Malacoplasma penetrans (strain HF-2) (Mycoplasma penetrans).